Reading from the N-terminus, the 497-residue chain is Guanosine-5'-triphosphate,3'-diphosphate pyrophosphatase (497 aa).

The protein belongs to the GppA/Ppx family. GppA subfamily.

It carries out the reaction guanosine 3'-diphosphate 5'-triphosphate + H2O = guanosine 3',5'-bis(diphosphate) + phosphate + H(+). It participates in purine metabolism; ppGpp biosynthesis; ppGpp from GTP: step 2/2. Catalyzes the conversion of pppGpp to ppGpp. Guanosine pentaphosphate (pppGpp) is a cytoplasmic signaling molecule which together with ppGpp controls the 'stringent response', an adaptive process that allows bacteria to respond to amino acid starvation, resulting in the coordinated regulation of numerous cellular activities. The sequence is that of Guanosine-5'-triphosphate,3'-diphosphate pyrophosphatase from Aliivibrio fischeri (strain ATCC 700601 / ES114) (Vibrio fischeri).